Reading from the N-terminus, the 186-residue chain is ATP synthase subunit delta (186 aa).

It belongs to the ATPase delta chain family. As to quaternary structure, F-type ATPases have 2 components, F(1) - the catalytic core - and F(0) - the membrane proton channel. F(1) has five subunits: alpha(3), beta(3), gamma(1), delta(1), epsilon(1). CF(0) has four main subunits: a(1), b(1), b'(1) and c(10-14). The alpha and beta chains form an alternating ring which encloses part of the gamma chain. F(1) is attached to F(0) by a central stalk formed by the gamma and epsilon chains, while a peripheral stalk is formed by the delta, b and b' chains.

Its subcellular location is the cell inner membrane. In terms of biological role, f(1)F(0) ATP synthase produces ATP from ADP in the presence of a proton or sodium gradient. F-type ATPases consist of two structural domains, F(1) containing the extramembraneous catalytic core and F(0) containing the membrane proton channel, linked together by a central stalk and a peripheral stalk. During catalysis, ATP synthesis in the catalytic domain of F(1) is coupled via a rotary mechanism of the central stalk subunits to proton translocation. Its function is as follows. This protein is part of the stalk that links CF(0) to CF(1). It either transmits conformational changes from CF(0) to CF(1) or is implicated in proton conduction. In Rhodospirillum centenum (strain ATCC 51521 / SW), this protein is ATP synthase subunit delta.